An 89-amino-acid polypeptide reads, in one-letter code: UPF0237 protein CPE1496 (89 aa).

The region spanning 4 to 84 is the ACT domain; that stretch reads VITVVGKDKV…ISVQHEDIFN (81 aa).

The protein belongs to the UPF0237 family.

This is UPF0237 protein CPE1496 from Clostridium perfringens (strain 13 / Type A).